Here is a 261-residue protein sequence, read N- to C-terminus: Peroxiredoxin PRX1, mitochondrial (261 aa).

Residues 1–13 constitute a mitochondrion transit peptide; the sequence is MFSRICSAQLKRT. Residues 49–212 enclose the Thioredoxin domain; the sequence is LRINSDAPNF…VLRVIDALQL (164 aa). S53 bears the Phosphoserine mark. The active-site Cysteine sulfenic acid (-SOH) intermediate is C91.

It belongs to the peroxiredoxin family. Prx6 subfamily. As to quaternary structure, homodimer; disulfide-linked.

It localises to the mitochondrion. It catalyses the reaction a hydroperoxide + 2 glutathione = an alcohol + glutathione disulfide + H2O. The catalysed reaction is [glutaredoxin]-dithiol + a hydroperoxide = [glutaredoxin]-disulfide + an alcohol + H2O. Functionally, thiol-specific peroxidase that catalyzes the reduction of hydrogen peroxide and organic hydroperoxides to water and alcohols, respectively. Plays a role in cell protection against oxidative stress by detoxifying peroxides and as sensor of hydrogen peroxide-mediated signaling events. Involved in mitochondrial protection of cadmium-induced oxidative stress. This chain is Peroxiredoxin PRX1, mitochondrial, found in Saccharomyces cerevisiae (strain ATCC 204508 / S288c) (Baker's yeast).